The following is a 67-amino-acid chain: Large ribosomal subunit protein uL29 (67 aa).

This sequence belongs to the universal ribosomal protein uL29 family. Part of the 50S ribosomal subunit. Contacts protein L23 and trigger factor when it is complexed with the ribosome.

Functionally, binds the 23S rRNA. One of the proteins that surrounds the polypeptide exit tunnel on the outside of the subunit. In Deinococcus radiodurans (strain ATCC 13939 / DSM 20539 / JCM 16871 / CCUG 27074 / LMG 4051 / NBRC 15346 / NCIMB 9279 / VKM B-1422 / R1), this protein is Large ribosomal subunit protein uL29 (rpmC).